The sequence spans 346 residues: Methionine import ATP-binding protein MetN 1 (346 aa).

The ABC transporter domain maps to 2-241 (IELKNVSKVF…PQHVTTKKFV (240 aa)). Position 38–45 (38–45 (GYSGAGKS)) interacts with ATP.

This sequence belongs to the ABC transporter superfamily. Methionine importer (TC 3.A.1.24) family. As to quaternary structure, the complex is composed of two ATP-binding proteins (MetN), two transmembrane proteins (MetI) and a solute-binding protein (MetQ).

The protein localises to the cell membrane. It catalyses the reaction L-methionine(out) + ATP + H2O = L-methionine(in) + ADP + phosphate + H(+). The catalysed reaction is D-methionine(out) + ATP + H2O = D-methionine(in) + ADP + phosphate + H(+). Functionally, part of the ABC transporter complex MetNIQ involved in methionine import. Responsible for energy coupling to the transport system. This chain is Methionine import ATP-binding protein MetN 1, found in Bacillus cereus (strain ATCC 14579 / DSM 31 / CCUG 7414 / JCM 2152 / NBRC 15305 / NCIMB 9373 / NCTC 2599 / NRRL B-3711).